The chain runs to 312 residues: DNA primase small subunit PriS (312 aa).

Catalysis depends on residues D88, D90, and D215.

The protein belongs to the eukaryotic-type primase small subunit family. In terms of assembly, heterodimer of a small subunit (PriS) and a large subunit (PriL). Requires Mg(2+) as cofactor. It depends on Mn(2+) as a cofactor.

In terms of biological role, catalytic subunit of DNA primase, an RNA polymerase that catalyzes the synthesis of short RNA molecules used as primers for DNA polymerase during DNA replication. The small subunit contains the primase catalytic core and has DNA synthesis activity on its own. Binding to the large subunit stabilizes and modulates the activity, increasing the rate of DNA synthesis while decreasing the length of the DNA fragments, and conferring RNA synthesis capability. The DNA polymerase activity may enable DNA primase to also catalyze primer extension after primer synthesis. May also play a role in DNA repair. This is DNA primase small subunit PriS from Pyrobaculum islandicum (strain DSM 4184 / JCM 9189 / GEO3).